The sequence spans 622 residues: SLAIN motif-containing protein-like (622 aa).

The stretch at 34-60 (DLKEVQKLHELVKRLEIQNQQLKIKRN) forms a coiled coil. Disordered regions lie at residues 404–441 (HRYS…IQNH) and 473–622 (VRSS…DGCY). Over residues 405 to 415 (RYSPSPLSSPR) the composition is skewed to low complexity. 4 stretches are compositionally biased toward polar residues: residues 416-430 (CQSP…TTSR), 484-502 (QGPS…STPP), 525-591 (VSTS…STVP), and 599-611 (SRRS…MNST).

Belongs to the SLAIN motif-containing family.

In Xenopus tropicalis (Western clawed frog), this protein is SLAIN motif-containing protein-like.